Here is a 235-residue protein sequence, read N- to C-terminus: MAQSKEQRVHDVFQSIYKKYDVMNSVISLQQHKSWRKDTMKQMDVQAGTSALDVCCGTGDWTLALSEAVGEQGSVIGLDFSENMLAVGREKVAAAKRTNISLVHGNAMALPYDDNTFDYVTIGFGLRNVPDYMQVLQEMCRVAKPGGKIVCLETSQPTIPVFKQLYFFYFKRIMPLAGKVFAKKYEEYSWLQESTLAFPGKDKLRDMFVEAGMKDVTVKSYTGGVCAMHMGIKPI.

S-adenosyl-L-methionine-binding positions include threonine 58, aspartate 79, and 106–107; that span reads NA.

Belongs to the class I-like SAM-binding methyltransferase superfamily. MenG/UbiE family.

It catalyses the reaction a 2-demethylmenaquinol + S-adenosyl-L-methionine = a menaquinol + S-adenosyl-L-homocysteine + H(+). Its pathway is quinol/quinone metabolism; menaquinone biosynthesis; menaquinol from 1,4-dihydroxy-2-naphthoate: step 2/2. Methyltransferase required for the conversion of demethylmenaquinol (DMKH2) to menaquinol (MKH2). In Shouchella clausii (strain KSM-K16) (Alkalihalobacillus clausii), this protein is Demethylmenaquinone methyltransferase.